Here is a 1184-residue protein sequence, read N- to C-terminus: von Willebrand factor A domain-containing protein 3A (1184 aa).

The signal sequence occupies residues 1-24 (MKKYRKISIGCFAMATQTSHVFHG). Residues 40 to 62 (GRDSKKPLKQKNMNGLGQNSDNG) form a disordered region. A compositionally biased stretch (polar residues) spans 50 to 62 (KNMNGLGQNSDNG). The stretch at 333–357 (TSRDMDELLAEIQKAQSLLSHVQAL) forms a coiled coil. The VWFA 1 domain occupies 511–708 (RVVVLLDISA…SIMSEMEKAL (198 aa)). Asn-709 carries N-linked (GlcNAc...) asparagine glycosylation. The tract at residues 729–780 (LGSSALPKEKPKTLQLRSQPKKLCPPRPTVPLGARMSIKDDPDREKSPPLKS) is disordered. Residues 765-776 (SIKDDPDREKSP) are compositionally biased toward basic and acidic residues. Residues 959 to 1131 (KVCILLDTSG…KIHSLLTKGF (173 aa)) enclose the VWFA 2 domain.

The protein resides in the secreted. This Homo sapiens (Human) protein is von Willebrand factor A domain-containing protein 3A (VWA3A).